A 338-amino-acid polypeptide reads, in one-letter code: D-erythrose-4-phosphate dehydrogenase (338 aa).

NAD(+) is bound at residue 11-12 (RI). Residues 153 to 155 (SCT), Arg-199, 212 to 213 (TK), and Arg-235 each bind substrate. The active-site Nucleophile is the Cys-154. Asn-317 is an NAD(+) binding site.

The protein belongs to the glyceraldehyde-3-phosphate dehydrogenase family. Epd subfamily. In terms of assembly, homotetramer.

Its subcellular location is the cytoplasm. The enzyme catalyses D-erythrose 4-phosphate + NAD(+) + H2O = 4-phospho-D-erythronate + NADH + 2 H(+). It participates in cofactor biosynthesis; pyridoxine 5'-phosphate biosynthesis; pyridoxine 5'-phosphate from D-erythrose 4-phosphate: step 1/5. In terms of biological role, catalyzes the NAD-dependent conversion of D-erythrose 4-phosphate to 4-phosphoerythronate. This is D-erythrose-4-phosphate dehydrogenase from Shewanella sp. (strain MR-4).